Reading from the N-terminus, the 156-residue chain is Protein-export protein SecB (156 aa).

This sequence belongs to the SecB family. In terms of assembly, homotetramer, a dimer of dimers. One homotetramer interacts with 1 SecA dimer.

It is found in the cytoplasm. Its function is as follows. One of the proteins required for the normal export of preproteins out of the cell cytoplasm. It is a molecular chaperone that binds to a subset of precursor proteins, maintaining them in a translocation-competent state. It also specifically binds to its receptor SecA. The protein is Protein-export protein SecB of Desulfotalea psychrophila (strain LSv54 / DSM 12343).